The chain runs to 279 residues: Estrogen receptor beta (279 aa).

The 235-residue stretch at 27-261 (SPEQLVLTLL…DLLLEMLNAH (235 aa)) folds into the NR LBD domain.

It belongs to the nuclear hormone receptor family. NR3 subfamily. In terms of assembly, binds DNA as a homodimer. Can form a heterodimer with ESR1. Interacts with NCOA1, NCOA3, NCOA5 and NCOA6 coactivators, leading to a strong increase of transcription of target genes. Interacts with UBE1C and AKAP13. Interacts with DNTTIP2. Interacts with CCDC62 in the presence of estradiol/E2; this interaction seems to enhance the transcription of target genes. Interacts with DNAAF4. Interacts with PRMT2. Interacts with CCAR2 (via N-terminus) in a ligand-independent manner. Interacts with RBM39, in the presence of estradiol (E2). Interacts with STUB1/CHIP.

It localises to the nucleus. Its function is as follows. Nuclear hormone receptor. Binds estrogens with an affinity similar to that of ESR1/ER-alpha, and activates expression of reporter genes containing estrogen response elements (ERE) in an estrogen-dependent manner. The protein is Estrogen receptor beta (ESR2) of Macaca mulatta (Rhesus macaque).